Reading from the N-terminus, the 108-residue chain is L-rhamnose mutarotase (108 aa).

A substrate-binding site is contributed by Tyr18. The Proton donor role is filled by His22. Substrate is bound by residues Tyr41 and Trp76–Trp77.

The protein belongs to the rhamnose mutarotase family. Homodimer.

Its subcellular location is the cytoplasm. The enzyme catalyses alpha-L-rhamnose = beta-L-rhamnose. The protein operates within carbohydrate metabolism; L-rhamnose metabolism. Its function is as follows. Involved in the anomeric conversion of L-rhamnose. The chain is L-rhamnose mutarotase from Paraburkholderia phymatum (strain DSM 17167 / CIP 108236 / LMG 21445 / STM815) (Burkholderia phymatum).